The primary structure comprises 78 residues: Large ribosomal subunit protein bL28 (78 aa).

The segment at 1–31 is disordered; sequence MAAHCQVTGAEPGFGHSISHSHRRNKRRFDP.

It belongs to the bacterial ribosomal protein bL28 family.

This chain is Large ribosomal subunit protein bL28, found in Paenarthrobacter aurescens (strain TC1).